The following is a 252-amino-acid chain: Phosphate import ATP-binding protein PstB (252 aa).

One can recognise an ABC transporter domain in the interval 5 to 247 (LIASDVNIFY…PRDERTEAYV (243 aa)). ATP is bound at residue 37 to 44 (GPSGCGKT).

This sequence belongs to the ABC transporter superfamily. Phosphate importer (TC 3.A.1.7) family. The complex is composed of two ATP-binding proteins (PstB), two transmembrane proteins (PstC and PstA) and a solute-binding protein (PstS).

It is found in the cell membrane. The enzyme catalyses phosphate(out) + ATP + H2O = ADP + 2 phosphate(in) + H(+). In terms of biological role, part of the ABC transporter complex PstSACB involved in phosphate import. Responsible for energy coupling to the transport system. This chain is Phosphate import ATP-binding protein PstB, found in Deinococcus geothermalis (strain DSM 11300 / CIP 105573 / AG-3a).